Reading from the N-terminus, the 291-residue chain is Co-chaperone protein DjlA (291 aa).

Over 1–6 (MRYWGK) the chain is Periplasmic. A helical transmembrane segment spans residues 7–31 (LLGLALGIVSSTGIWGMIMGLLMGH). Residues 32 to 291 (WIDRARASRR…ELLKSANQTK (260 aa)) are Cytoplasmic-facing. The disordered stretch occupies residues 177–223 (ESPTGQQSRQNQSRQNGKSQQRRNNGYSNGHSYGGQRPPSPLRGPTV). Over residues 181 to 211 (GQQSRQNQSRQNGKSQQRRNNGYSNGHSYGG) the composition is skewed to low complexity. The region spanning 225-291 (SACRTLGVRS…ELLKSANQTK (67 aa)) is the J domain.

In terms of assembly, homodimer.

The protein localises to the cell inner membrane. In terms of biological role, regulatory DnaK co-chaperone. Direct interaction between DnaK and DjlA is needed for the induction of the wcaABCDE operon, involved in the synthesis of a colanic acid polysaccharide capsule, possibly through activation of the RcsB/RcsC phosphotransfer signaling pathway. The colanic acid capsule may help the bacterium survive conditions outside the host. The polypeptide is Co-chaperone protein DjlA (Pectobacterium atrosepticum (strain SCRI 1043 / ATCC BAA-672) (Erwinia carotovora subsp. atroseptica)).